An 89-amino-acid polypeptide reads, in one-letter code: Putative ankyrin repeat protein RF_1157 (89 aa).

An ANK repeat occupies 2–32; that stretch reads YNTTPLNFAINQENNEEVIKYLLANGANPRL.

The protein is Putative ankyrin repeat protein RF_1157 of Rickettsia felis (strain ATCC VR-1525 / URRWXCal2) (Rickettsia azadi).